Consider the following 394-residue polypeptide: Elongation factor Tu (394 aa).

In terms of domain architecture, tr-type G spans 10 to 204 (KEHANIGTIG…AVDDYIPTPE (195 aa)). Residues 19–26 (GHVDHGKT) are G1. Residue 19-26 (GHVDHGKT) participates in GTP binding. Thr-26 provides a ligand contact to Mg(2+). Residues 60 to 64 (GITIN) form a G2 region. The segment at 81–84 (DCPG) is G3. GTP-binding positions include 81 to 85 (DCPGH) and 136 to 139 (NKVD). The segment at 136–139 (NKVD) is G4. Residues 174 to 176 (SAL) form a G5 region.

Belongs to the TRAFAC class translation factor GTPase superfamily. Classic translation factor GTPase family. EF-Tu/EF-1A subfamily. Monomer.

It is found in the cytoplasm. It carries out the reaction GTP + H2O = GDP + phosphate + H(+). Its function is as follows. GTP hydrolase that promotes the GTP-dependent binding of aminoacyl-tRNA to the A-site of ribosomes during protein biosynthesis. The sequence is that of Elongation factor Tu from Staphylococcus haemolyticus (strain JCSC1435).